A 476-amino-acid polypeptide reads, in one-letter code: Methylenetetrahydrofolate--tRNA-(uracil-5-)-methyltransferase TrmFO (476 aa).

14–19 (GGGLAG) serves as a coordination point for FAD. The tract at residues 428–447 (LTEPPTHGADGKKLRGPEKS) is disordered. Residues 436-447 (ADGKKLRGPEKS) are compositionally biased toward basic and acidic residues.

Belongs to the MnmG family. TrmFO subfamily. The cofactor is FAD.

It is found in the cytoplasm. The enzyme catalyses uridine(54) in tRNA + (6R)-5,10-methylene-5,6,7,8-tetrahydrofolate + NADH + H(+) = 5-methyluridine(54) in tRNA + (6S)-5,6,7,8-tetrahydrofolate + NAD(+). It carries out the reaction uridine(54) in tRNA + (6R)-5,10-methylene-5,6,7,8-tetrahydrofolate + NADPH + H(+) = 5-methyluridine(54) in tRNA + (6S)-5,6,7,8-tetrahydrofolate + NADP(+). Functionally, catalyzes the folate-dependent formation of 5-methyl-uridine at position 54 (M-5-U54) in all tRNAs. This Rhodopseudomonas palustris (strain BisA53) protein is Methylenetetrahydrofolate--tRNA-(uracil-5-)-methyltransferase TrmFO.